Here is a 331-residue protein sequence, read N- to C-terminus: Beta-hexosaminidase (331 aa).

Substrate contacts are provided by residues Asp60, Arg68, Arg133, and 163–164 (KH). The active-site Proton donor/acceptor is His176. Asp247 functions as the Nucleophile in the catalytic mechanism.

This sequence belongs to the glycosyl hydrolase 3 family. NagZ subfamily.

The protein resides in the cytoplasm. The enzyme catalyses Hydrolysis of terminal non-reducing N-acetyl-D-hexosamine residues in N-acetyl-beta-D-hexosaminides.. It functions in the pathway cell wall biogenesis; peptidoglycan recycling. Functionally, plays a role in peptidoglycan recycling by cleaving the terminal beta-1,4-linked N-acetylglucosamine (GlcNAc) from peptide-linked peptidoglycan fragments, giving rise to free GlcNAc, anhydro-N-acetylmuramic acid and anhydro-N-acetylmuramic acid-linked peptides. The sequence is that of Beta-hexosaminidase from Xanthomonas campestris pv. campestris (strain B100).